The primary structure comprises 350 residues: Chorismate synthase (350 aa).

NADP(+) is bound by residues Arg-39 and Arg-45. Residues 85 to 104 (KDKKVPPVTRPRPGHADLPG) form a disordered region. Residues 119 to 121 (RAS), 213 to 214 (QG), Gly-258, 273 to 277 (KPIPT), and Arg-299 contribute to the FMN site.

This sequence belongs to the chorismate synthase family. In terms of assembly, homotetramer. Requires FMNH2 as cofactor.

The enzyme catalyses 5-O-(1-carboxyvinyl)-3-phosphoshikimate = chorismate + phosphate. Its pathway is metabolic intermediate biosynthesis; chorismate biosynthesis; chorismate from D-erythrose 4-phosphate and phosphoenolpyruvate: step 7/7. Its function is as follows. Catalyzes the anti-1,4-elimination of the C-3 phosphate and the C-6 proR hydrogen from 5-enolpyruvylshikimate-3-phosphate (EPSP) to yield chorismate, which is the branch point compound that serves as the starting substrate for the three terminal pathways of aromatic amino acid biosynthesis. This reaction introduces a second double bond into the aromatic ring system. The sequence is that of Chorismate synthase from Caldanaerobacter subterraneus subsp. tengcongensis (strain DSM 15242 / JCM 11007 / NBRC 100824 / MB4) (Thermoanaerobacter tengcongensis).